Consider the following 249-residue polypeptide: uncharacterized protein (249 aa).

2 helical membrane-spanning segments follow: residues 49–69 (ILLS…CYLL) and 223–243 (IVMS…VHHL).

The protein resides in the cell membrane. This is an uncharacterized protein from Bacillus anthracis.